Reading from the N-terminus, the 283-residue chain is MGEFSILLQQGNGWFFIPSAILLGILHGLEPGHSKTMMAAFIIAIKGTIKQAFMLGLAATLSHTAVVWLIALGGMYLSRAYAAESVEPWLQLISAIIILGTACWMFWRTWRGEQQWLTGSHHDHDHDHDHDHDHDHDHDHDHDHHGHTYPEGAMSKAYQDAHERAHAADIQRRFHGQKVTNEQILLFGLTGGLIPCPAAITLLLICIQLQALTLGATMVLCFSLGLALTLVAVGVGAAISVQQAVKRWNGFTTLARRAPYFSSILIGLVGLYMGIHGYTGIMQ.

The Periplasmic portion of the chain corresponds to 1–5 (MGEFS). Residues 6–26 (ILLQQGNGWFFIPSAILLGIL) form a helical membrane-spanning segment. Topologically, residues 27–51 (HGLEPGHSKTMMAAFIIAIKGTIKQ) are cytoplasmic. The helical transmembrane segment at 52 to 72 (AFMLGLAATLSHTAVVWLIAL) threads the bilayer. The Periplasmic portion of the chain corresponds to 73–85 (GGMYLSRAYAAES). A helical membrane pass occupies residues 86–106 (VEPWLQLISAIIILGTACWMF). At 107–183 (WRTWRGEQQW…FHGQKVTNEQ (77 aa)) the chain is on the cytoplasmic side. Residues 120 to 148 (SHHDHDHDHDHDHDHDHDHDHDHDHHGHT) are compositionally biased toward basic and acidic residues. Residues 120-149 (SHHDHDHDHDHDHDHDHDHDHDHDHHGHTY) form a disordered region. A helical transmembrane segment spans residues 184-204 (ILLFGLTGGLIPCPAAITLLL). Topologically, residues 205-218 (ICIQLQALTLGATM) are periplasmic. Residues 219 to 239 (VLCFSLGLALTLVAVGVGAAI) form a helical membrane-spanning segment. At 240-260 (SVQQAVKRWNGFTTLARRAPY) the chain is on the cytoplasmic side. A helical membrane pass occupies residues 261-281 (FSSILIGLVGLYMGIHGYTGI). The Periplasmic portion of the chain corresponds to 282–283 (MQ).

This sequence belongs to the NiCoT transporter (TC 2.A.52) family. RcnA subfamily.

It localises to the cell inner membrane. Efflux system for nickel and cobalt. This Salmonella arizonae (strain ATCC BAA-731 / CDC346-86 / RSK2980) protein is Nickel/cobalt efflux system RcnA (rcnA).